A 33-amino-acid chain; its full sequence is Brevinin-2Rk (33 aa).

Cysteines 27 and 33 form a disulfide.

Expressed by the skin glands.

Its subcellular location is the secreted. Antimicrobial peptide. This Pelophylax ridibundus (Marsh frog) protein is Brevinin-2Rk.